The sequence spans 585 residues: ATP-dependent lipid A-core flippase (585 aa).

6 consecutive transmembrane segments (helical) span residues 23-43 (LAFG…AYVI), 64-84 (IAAY…FMGT), 140-160 (AFLT…WMFY), 163-183 (WQLS…VSVV), 247-267 (ILSV…VLYI), and 273-293 (FITD…TMLL). The ABC transmembrane type-1 domain maps to 27 to 308 (VAIIGMVGYS…LTTVNSEFQK (282 aa)). In terms of domain architecture, ABC transporter spans 340–576 (LEFRDVTFHY…DGAYAQLHKL (237 aa)). 374–381 (GRSGSGKS) lines the ATP pocket.

It belongs to the ABC transporter superfamily. Lipid exporter (TC 3.A.1.106) family. In terms of assembly, homodimer.

It is found in the cell inner membrane. The catalysed reaction is ATP + H2O + lipid A-core oligosaccharideSide 1 = ADP + phosphate + lipid A-core oligosaccharideSide 2.. Involved in lipopolysaccharide (LPS) biosynthesis. Translocates lipid A-core from the inner to the outer leaflet of the inner membrane. Transmembrane domains (TMD) form a pore in the inner membrane and the ATP-binding domain (NBD) is responsible for energy generation. This is ATP-dependent lipid A-core flippase from Pseudoalteromonas atlantica (strain T6c / ATCC BAA-1087).